Reading from the N-terminus, the 530-residue chain is Bifunctional purine biosynthesis protein PurH (530 aa).

An MGS-like domain is found at 1–148 (MNNARPIHRA…KNHKDVAIVV (148 aa)).

Belongs to the PurH family.

It carries out the reaction (6R)-10-formyltetrahydrofolate + 5-amino-1-(5-phospho-beta-D-ribosyl)imidazole-4-carboxamide = 5-formamido-1-(5-phospho-D-ribosyl)imidazole-4-carboxamide + (6S)-5,6,7,8-tetrahydrofolate. The enzyme catalyses IMP + H2O = 5-formamido-1-(5-phospho-D-ribosyl)imidazole-4-carboxamide. It participates in purine metabolism; IMP biosynthesis via de novo pathway; 5-formamido-1-(5-phospho-D-ribosyl)imidazole-4-carboxamide from 5-amino-1-(5-phospho-D-ribosyl)imidazole-4-carboxamide (10-formyl THF route): step 1/1. It functions in the pathway purine metabolism; IMP biosynthesis via de novo pathway; IMP from 5-formamido-1-(5-phospho-D-ribosyl)imidazole-4-carboxamide: step 1/1. In Vibrio cholerae serotype O1 (strain M66-2), this protein is Bifunctional purine biosynthesis protein PurH.